A 259-amino-acid chain; its full sequence is Type III pantothenate kinase (259 aa).

An ATP-binding site is contributed by 6–13; the sequence is DAGNTNIV. Substrate-binding positions include Tyr-100 and 107–110; that span reads GADR. Asp-109 (proton acceptor) is an active-site residue. K(+) is bound at residue Asp-129. Thr-132 lines the ATP pocket. Thr-184 lines the substrate pocket.

Belongs to the type III pantothenate kinase family. In terms of assembly, homodimer. NH4(+) serves as cofactor. The cofactor is K(+).

It is found in the cytoplasm. It catalyses the reaction (R)-pantothenate + ATP = (R)-4'-phosphopantothenate + ADP + H(+). The protein operates within cofactor biosynthesis; coenzyme A biosynthesis; CoA from (R)-pantothenate: step 1/5. Functionally, catalyzes the phosphorylation of pantothenate (Pan), the first step in CoA biosynthesis. This is Type III pantothenate kinase from Clostridium novyi (strain NT).